Consider the following 388-residue polypeptide: Galactokinase (388 aa).

A substrate-binding site is contributed by 33–36 (EHTD). ATP-binding positions include S67 and 125–131 (GAGLSSS). Mg(2+) is bound by residues S131 and E163. The active-site Proton acceptor is the D175. Residue Y225 coordinates substrate.

Belongs to the GHMP kinase family. GalK subfamily.

It localises to the cytoplasm. The catalysed reaction is alpha-D-galactose + ATP = alpha-D-galactose 1-phosphate + ADP + H(+). The protein operates within carbohydrate metabolism; galactose metabolism. Catalyzes the transfer of the gamma-phosphate of ATP to D-galactose to form alpha-D-galactose-1-phosphate (Gal-1-P). The protein is Galactokinase of Limosilactobacillus fermentum (strain NBRC 3956 / LMG 18251) (Lactobacillus fermentum).